Consider the following 381-residue polypeptide: Phospholipid scramblase family protein C343.06c (381 aa).

The segment at 336–369 (QEILKNDQETTPSTNDSSSETKSPFLSDADLDQQ) is disordered. A compositionally biased stretch (polar residues) spans 344 to 359 (ETTPSTNDSSSETKSP).

It belongs to the phospholipid scramblase family.

The protein resides in the mitochondrion. This chain is Phospholipid scramblase family protein C343.06c, found in Schizosaccharomyces pombe (strain 972 / ATCC 24843) (Fission yeast).